The following is a 407-amino-acid chain: Geranylgeranyl diphosphate reductase (407 aa).

Belongs to the geranylgeranyl reductase family. ChlP subfamily.

It catalyses the reaction phytyl diphosphate + 3 NADP(+) = geranylgeranyl diphosphate + 3 NADPH + 3 H(+). Its pathway is porphyrin-containing compound metabolism; chlorophyll biosynthesis. In terms of biological role, catalyzes the stepwise hydrogenation of geranylgeraniol to phytol during chlorophyll A (ChlA) biosynthesis. The polypeptide is Geranylgeranyl diphosphate reductase (chlP) (Synechocystis sp. (strain ATCC 27184 / PCC 6803 / Kazusa)).